Reading from the N-terminus, the 173-residue chain is UPF0102 protein Psyc_1908 (173 aa).

Belongs to the UPF0102 family.

The polypeptide is UPF0102 protein Psyc_1908 (Psychrobacter arcticus (strain DSM 17307 / VKM B-2377 / 273-4)).